A 317-amino-acid chain; its full sequence is uncharacterized protein (317 aa).

This is an uncharacterized protein from Lactuca sativa (Garden lettuce).